Consider the following 281-residue polypeptide: MELYAASHSLPNYPSSFLFKPKITTFHTTLFPTKFAPFKASFFSPNHLTLTTPMNPPTTSLSSAAFVEHNNGSTSTSLPFHPETRVGEVKRVTKETNVSVKINLDGSGVADSSTGIPFLDHMLDQLASHGLFDVHVKATGDVHIDDHHTNEDVALAIGTALLQALGDRKGINRFGDFSAPLDEALIHVSLDLSGRPHLSYNLDIPTQRVGTYDTQVVEHFLQSIVNTSGMTLHIRQLAGRNSHHIIEATFKAFARALRQATEYDPRRRGSVPSSKGVLSRS.

The transit peptide at 1–85 directs the protein to the chloroplast; sequence MELYAASHSL…TSLPFHPETR (85 aa). Substrate-binding positions include Glu-95, 121–129, 147–151, Arg-173, and Arg-195; these read HMLDQLASH and HHTNE. Positions 121, 147, 148, and 151 each coordinate Mn(2+). Mn(2+) is bound by residues His-219, His-243, His-244, and Glu-247. Residues 243–251 and 273–275 each bind substrate; these read HHIIEATFK and SSK.

This sequence belongs to the imidazoleglycerol-phosphate dehydratase family. It depends on Mn(2+) as a cofactor.

The protein localises to the plastid. It is found in the chloroplast. The enzyme catalyses D-erythro-1-(imidazol-4-yl)glycerol 3-phosphate = 3-(imidazol-4-yl)-2-oxopropyl phosphate + H2O. It participates in amino-acid biosynthesis; L-histidine biosynthesis; L-histidine from 5-phospho-alpha-D-ribose 1-diphosphate: step 6/9. The chain is Imidazoleglycerol-phosphate dehydratase, chloroplastic from Pisum sativum (Garden pea).